The sequence spans 595 residues: Inactive metallocarboxypeptidase ecm14 (595 aa).

A signal peptide spans 1 to 22 (MYRPDHVFVILCAVFFTGQVTA). The propeptide occupies 23 to 178 (VPAGTGITHP…MIYESQYPSR (156 aa)). Residues 206–527 (NYQPFPVILQ…NSVLVLGHFL (322 aa)) enclose the Peptidase M14 domain. Residues His270 and Glu273 each contribute to the Zn(2+) site. Residues 270 to 273 (HARE), Arg328, and 345 to 346 (DR) contribute to the substrate site. An intrachain disulfide couples Cys339 to Cys362. Asn386 carries an N-linked (GlcNAc...) asparagine glycan. His402 provides a ligand contact to Zn(2+). Substrate is bound at residue 403–404 (SY).

Belongs to the peptidase M14 family. Zn(2+) serves as cofactor.

It is found in the vacuole. Its subcellular location is the secreted. Its function is as follows. Inactive carboxypeptidase that may play a role in cell wall organization and biogenesis. The protein is Inactive metallocarboxypeptidase ecm14 (ecm14) of Talaromyces marneffei (strain ATCC 18224 / CBS 334.59 / QM 7333) (Penicillium marneffei).